The primary structure comprises 483 residues: Keratin, type II cytoskeletal 7 (483 aa).

S2 carries the N-acetylserine modification. Residues S2, S6, and S7 each carry the phosphoserine modification. Positions 2-107 are head; sequence SVQFSSQTFS…DPQIQQVRKE (106 aa). An O-linked (GlcNAc) serine glycan is attached at S12. The tract at residues 14–37 is disordered; sequence SAAFPRRGGQGRLSSVSSRAGSVS. R20 is subject to Dimethylated arginine; alternate. R20 carries the post-translational modification Omega-N-methylarginine; alternate. The span at 25 to 37 shows a compositional bias: low complexity; that stretch reads RLSSVSSRAGSVS. A phosphoserine mark is found at S63 and S88. Residues 107–143 form a coil 1A region; it reads EEREQIKTLNNKFASFIDKVRFLEQQNQMLETKWRLL. In terms of domain architecture, IF rod spans 108–420; the sequence is EREQIKTLNN…KLLEGEESRL (313 aa). Position 114 is a phosphothreonine (T114). The segment at 144–161 is linker 1; it reads QEQKSSKGSSLPAIFEAH. K147 is covalently cross-linked (Glycyl lysine isopeptide (Lys-Gly) (interchain with G-Cter in SUMO2)). Residues 162–253 form a coil 1B region; sequence IANLRRQLDG…TLYEMELNEL (92 aa). K196 is modified (N6-acetyllysine). Residues 254-277 are linker 12; it reads QTQISDTSVVLSMDNSRSLDLDSI. 2 positions are modified to phosphoserine: S269 and S271. The tract at residues 278-416 is coil 2; sequence ISEVKAQYED…ATYRKLLEGE (139 aa). Residues K282 and K303 each participate in a glycyl lysine isopeptide (Lys-Gly) (interchain with G-Cter in SUMO2) cross-link. T306 carries the phosphothreonine modification. Glycyl lysine isopeptide (Lys-Gly) (interchain with G-Cter in SUMO2) cross-links involve residues K313 and K348. The tail stretch occupies residues 417–483; it reads ESRLSGDGVG…TSSSRRSVRN (67 aa).

The protein belongs to the intermediate filament family. Heterotetramer of two type I and two type II keratins. Interacts with eukaryotic translation initiator factor 3 (eIF3) subunit EIF3S10. Interacts with GPER1. Arg-20 is dimethylated, probably to asymmetric dimethylarginine.

In terms of biological role, blocks interferon-dependent interphase and stimulates DNA synthesis in cells. This Potorous tridactylus (Potoroo) protein is Keratin, type II cytoskeletal 7.